A 24-amino-acid polypeptide reads, in one-letter code: Brevinin-1JDb (24 aa).

The cysteines at positions 18 and 24 are disulfide-linked.

Expressed by the skin glands.

The protein resides in the secreted. Its function is as follows. Has antibacterial activity against E.coli and S.aureus strains. Has antifungal activity against C.albicans. Has hemolytic activity against rabbit erythrocytes. The protein is Brevinin-1JDb of Odorrana jingdongensis (Jingdong frog).